A 900-amino-acid chain; its full sequence is Suppressor of activated egl-4 protein 1 (900 aa).

Disordered regions lie at residues 1–75 (MPPP…HLPT), 340–380 (PVAE…SRKN), and 406–425 (WAST…ESLE). Residues 53-75 (ASGQQHRPSIMSGQSHQNNHLPT) show a composition bias toward polar residues. Basic and acidic residues-rich tracts occupy residues 358-377 (GDMK…DGPS) and 412-425 (ADEK…ESLE). The 94-residue stretch at 451-544 (PHINLGKNYQ…AAVEDLLRSD (94 aa)) folds into the ELM2 domain. An SANT domain is found at 560–611 (NDSVLWTPDEIYQFQDAIYQSEKDFDKVAVELPGKSVKECVQFYYTWKKDCP). The disordered stretch occupies residues 710–729 (PTAPRAHHTPSASASKKGAQ). The segment at 736–758 (FHCRLCDKCFEKVKSLNAHMKSH) adopts a C2H2-type zinc-finger fold.

As to quaternary structure, may be a component of a histone deacetylase complex containing saeg-2, saeg-1 and hda-2. May interact with egl-4. As to expression, ubiquitously expressed.

The protein localises to the nucleus. Functionally, as a likely component of a histone deacetylase complex, together with saeg-2 and hda-2, functions downstream of the cAMP-dependent kinase egl-4 to regulate the expression of genes required for egg-laying and foraging. This is Suppressor of activated egl-4 protein 1 from Caenorhabditis elegans.